Consider the following 261-residue polypeptide: Zinc finger protein 664 (261 aa).

9 C2H2-type zinc fingers span residues Tyr-3–His-25, His-31–His-53, Tyr-59–His-81, Tyr-87–His-109, Tyr-115–His-137, Phe-143–His-165, Tyr-171–His-193, Tyr-199–His-221, and Phe-227–His-249. Residue Lys-257 forms a Glycyl lysine isopeptide (Lys-Gly) (interchain with G-Cter in SUMO2) linkage.

The protein belongs to the krueppel C2H2-type zinc-finger protein family.

The protein resides in the nucleus. Its function is as follows. May be involved in transcriptional regulation. The protein is Zinc finger protein 664 (ZNF664) of Pongo abelii (Sumatran orangutan).